Consider the following 78-residue polypeptide: Exodeoxyribonuclease 7 small subunit (78 aa).

Belongs to the XseB family. As to quaternary structure, heterooligomer composed of large and small subunits.

It is found in the cytoplasm. The enzyme catalyses Exonucleolytic cleavage in either 5'- to 3'- or 3'- to 5'-direction to yield nucleoside 5'-phosphates.. Functionally, bidirectionally degrades single-stranded DNA into large acid-insoluble oligonucleotides, which are then degraded further into small acid-soluble oligonucleotides. The polypeptide is Exodeoxyribonuclease 7 small subunit (Pediococcus pentosaceus (strain ATCC 25745 / CCUG 21536 / LMG 10740 / 183-1w)).